Here is a 298-residue protein sequence, read N- to C-terminus: Acetyl-coenzyme A carboxylase carboxyl transferase subunit beta (298 aa).

In terms of domain architecture, CoA carboxyltransferase N-terminal spans 26-295; sequence LWIKCPETGE…DNANAVVPLA (270 aa).

Belongs to the AccD/PCCB family. Acetyl-CoA carboxylase is a heterohexamer composed of biotin carboxyl carrier protein (AccB), biotin carboxylase (AccC) and two subunits each of ACCase subunit alpha (AccA) and ACCase subunit beta (AccD).

It is found in the cytoplasm. The enzyme catalyses N(6)-carboxybiotinyl-L-lysyl-[protein] + acetyl-CoA = N(6)-biotinyl-L-lysyl-[protein] + malonyl-CoA. The protein operates within lipid metabolism; malonyl-CoA biosynthesis; malonyl-CoA from acetyl-CoA: step 1/1. In terms of biological role, component of the acetyl coenzyme A carboxylase (ACC) complex. Biotin carboxylase (BC) catalyzes the carboxylation of biotin on its carrier protein (BCCP) and then the CO(2) group is transferred by the transcarboxylase to acetyl-CoA to form malonyl-CoA. This chain is Acetyl-coenzyme A carboxylase carboxyl transferase subunit beta, found in Agrobacterium fabrum (strain C58 / ATCC 33970) (Agrobacterium tumefaciens (strain C58)).